The chain runs to 343 residues: Protein RecA (343 aa).

66 to 73 (GPESSGKT) is an ATP binding site.

Belongs to the RecA family.

It localises to the cytoplasm. In terms of biological role, can catalyze the hydrolysis of ATP in the presence of single-stranded DNA, the ATP-dependent uptake of single-stranded DNA by duplex DNA, and the ATP-dependent hybridization of homologous single-stranded DNAs. It interacts with LexA causing its activation and leading to its autocatalytic cleavage. In Rickettsia bellii (strain OSU 85-389), this protein is Protein RecA.